The chain runs to 125 residues: Large ribosomal subunit protein bL19 (125 aa).

It belongs to the bacterial ribosomal protein bL19 family.

This protein is located at the 30S-50S ribosomal subunit interface and may play a role in the structure and function of the aminoacyl-tRNA binding site. The protein is Large ribosomal subunit protein bL19 of Wolbachia sp. subsp. Brugia malayi (strain TRS).